Consider the following 530-residue polypeptide: Autoinducer-2 kinase (530 aa).

Belongs to the FGGY kinase family.

It is found in the cytoplasm. It carries out the reaction (S)-4,5-dihydroxypentane-2,3-dione + ATP = (2S)-2-hydroxy-3,4-dioxopentyl phosphate + ADP + H(+). Its function is as follows. Catalyzes the phosphorylation of autoinducer-2 (AI-2) to phospho-AI-2, which subsequently inactivates the transcriptional regulator LsrR and leads to the transcription of the lsr operon. Phosphorylates the ring-open form of (S)-4,5-dihydroxypentane-2,3-dione (DPD), which is the precursor to all AI-2 signaling molecules, at the C5 position. This chain is Autoinducer-2 kinase, found in Escherichia coli (strain ATCC 8739 / DSM 1576 / NBRC 3972 / NCIMB 8545 / WDCM 00012 / Crooks).